The following is a 567-amino-acid chain: Urease subunit alpha (567 aa).

One can recognise a Urease domain in the interval 129-567 (GGIDSHIHFI…LPMAQRYFLF (439 aa)). 3 residues coordinate Ni(2+): His-134, His-136, and Lys-217. Lys-217 is modified (N6-carboxylysine). His-219 contributes to the substrate binding site. Ni(2+) is bound by residues His-246 and His-272. His-320 serves as the catalytic Proton donor. Asp-360 serves as a coordination point for Ni(2+).

It belongs to the metallo-dependent hydrolases superfamily. Urease alpha subunit family. As to quaternary structure, heterotrimer of UreA (gamma), UreB (beta) and UreC (alpha) subunits. Three heterotrimers associate to form the active enzyme. Ni cation serves as cofactor. Carboxylation allows a single lysine to coordinate two nickel ions.

It localises to the cytoplasm. It carries out the reaction urea + 2 H2O + H(+) = hydrogencarbonate + 2 NH4(+). The protein operates within nitrogen metabolism; urea degradation; CO(2) and NH(3) from urea (urease route): step 1/1. The polypeptide is Urease subunit alpha (Tolumonas auensis (strain DSM 9187 / NBRC 110442 / TA 4)).